The following is a 31-amino-acid chain: Cytochrome b6-f complex subunit 6 (31 aa).

Residues 4–24 (ITSYFGFLLAALTITSVLFIG) form a helical membrane-spanning segment.

Belongs to the PetL family. In terms of assembly, the 4 large subunits of the cytochrome b6-f complex are cytochrome b6, subunit IV (17 kDa polypeptide, PetD), cytochrome f and the Rieske protein, while the 4 small subunits are PetG, PetL, PetM and PetN. The complex functions as a dimer.

It localises to the plastid. Its subcellular location is the chloroplast thylakoid membrane. Its function is as follows. Component of the cytochrome b6-f complex, which mediates electron transfer between photosystem II (PSII) and photosystem I (PSI), cyclic electron flow around PSI, and state transitions. PetL is important for photoautotrophic growth as well as for electron transfer efficiency and stability of the cytochrome b6-f complex. This chain is Cytochrome b6-f complex subunit 6, found in Arabidopsis thaliana (Mouse-ear cress).